Reading from the N-terminus, the 380-residue chain is Alcohol dehydrogenase 2 (380 aa).

Zn(2+) contacts are provided by cysteine 48, threonine 50, histidine 70, cysteine 100, cysteine 103, cysteine 106, cysteine 114, and cysteine 178. Threonine 50 and histidine 70 together coordinate an alcohol. NAD(+) is bound at residue threonine 50. NAD(+)-binding positions include 203–208 (GLGAVG), aspartate 227, arginine 232, threonine 273, valine 296, 296–298 (VGV), phenylalanine 323, and arginine 373.

Belongs to the zinc-containing alcohol dehydrogenase family. As to quaternary structure, homodimer. Homotetramer. Requires Zn(2+) as cofactor.

It localises to the cytoplasm. The enzyme catalyses a primary alcohol + NAD(+) = an aldehyde + NADH + H(+). It catalyses the reaction a secondary alcohol + NAD(+) = a ketone + NADH + H(+). The chain is Alcohol dehydrogenase 2 (ADH2) from Solanum tuberosum (Potato).